The following is a 263-amino-acid chain: MMPKHCFLGFLISFFLTGVAGTQSTHESLKPQRVQFQSRNFHNILQWQPGRALTGNSSVYFVQYKIMFSCSMKSSHQKPSGCWQHISCNFPGCRTLAKYGQRQWKNKEDCWGTQELSCDLTSETSDIQEPYYGRVRAASAGSYSEWSMTPRFTPWWETKIDPPVMNITQVNGSLLVILHAPNLPYRYQKEKNVSIEDYYELLYRVFIINNSLEKEQKVYEGAHRAVEIEALTPHSSYCVVAEIYQPMLDRRSQRSEERCVEIP.

The N-terminal stretch at 1–21 (MMPKHCFLGFLISFFLTGVAG) is a signal peptide. Fibronectin type-III domains are found at residues 26-68 (HESL…KIMF), 100-161 (GQRQ…TKID), and 162-263 (PPVM…VEIP). The N-linked (GlcNAc...) asparagine glycan is linked to asparagine 56. An intrachain disulfide couples cysteine 110 to cysteine 118. N-linked (GlcNAc...) asparagine glycosylation is found at asparagine 166, asparagine 171, asparagine 192, and asparagine 209. The cysteines at positions 238 and 259 are disulfide-linked.

It belongs to the type II cytokine receptor family. Expressed in placenta, spleen, breast, skin and lung. Also detected in intestinal tract, testis, brain, heart and thymus. No expression found in prostate, bladder, kidney, ovary, muscle, bone marrow, liver and uterus. Isoform 1 is expressed only in placenta. Isoform 2 is expressed in placenta and breast and at lower level in spleen, skin, thymus and stomach.

It localises to the secreted. Functionally, isoform 2 is a receptor for IL22. Binds to IL22, prevents interaction with the functional IL-22R complex and blocks the activity of IL22 (in vitro). May play an important role as an IL22 antagonist in the regulation of inflammatory responses. Its function is as follows. Isoform 1 may play a role in establishing and maintaining successful pregnancy. This is Interleukin-22 receptor subunit alpha-2 (IL22RA2) from Homo sapiens (Human).